The sequence spans 61 residues: Small ribosomal subunit protein uS14B (61 aa).

Zn(2+)-binding residues include C24, C27, C40, and C43.

The protein belongs to the universal ribosomal protein uS14 family. Zinc-binding uS14 subfamily. As to quaternary structure, part of the 30S ribosomal subunit. Contacts proteins S3 and S10. Requires Zn(2+) as cofactor.

In terms of biological role, binds 16S rRNA, required for the assembly of 30S particles and may also be responsible for determining the conformation of the 16S rRNA at the A site. In Shouchella clausii (strain KSM-K16) (Alkalihalobacillus clausii), this protein is Small ribosomal subunit protein uS14B.